The chain runs to 431 residues: tRNA(Ile)-lysidine synthase (431 aa).

Residue 20–25 coordinates ATP; that stretch reads SGGLDS.

This sequence belongs to the tRNA(Ile)-lysidine synthase family.

Its subcellular location is the cytoplasm. The enzyme catalyses cytidine(34) in tRNA(Ile2) + L-lysine + ATP = lysidine(34) in tRNA(Ile2) + AMP + diphosphate + H(+). Its function is as follows. Ligates lysine onto the cytidine present at position 34 of the AUA codon-specific tRNA(Ile) that contains the anticodon CAU, in an ATP-dependent manner. Cytidine is converted to lysidine, thus changing the amino acid specificity of the tRNA from methionine to isoleucine. This is tRNA(Ile)-lysidine synthase from Escherichia coli O157:H7.